Here is a 196-residue protein sequence, read N- to C-terminus: Ribosomal RNA small subunit methyltransferase G (196 aa).

Residues G77, F82, 127–128 (AE), and R140 each bind S-adenosyl-L-methionine.

Belongs to the methyltransferase superfamily. RNA methyltransferase RsmG family.

It is found in the cytoplasm. Its function is as follows. Specifically methylates the N7 position of a guanine in 16S rRNA. This Aquifex aeolicus (strain VF5) protein is Ribosomal RNA small subunit methyltransferase G.